A 124-amino-acid chain; its full sequence is Protein RibT (124 aa).

In terms of domain architecture, N-acetyltransferase spans Ile-3 to Asn-124.

In terms of biological role, involved in riboflavin biosynthesis. This chain is Protein RibT (ribT), found in Bacillus subtilis (strain 168).